The sequence spans 133 residues: Ribosome-binding factor A (133 aa).

Belongs to the RbfA family. As to quaternary structure, monomer. Binds 30S ribosomal subunits, but not 50S ribosomal subunits or 70S ribosomes.

Its subcellular location is the cytoplasm. One of several proteins that assist in the late maturation steps of the functional core of the 30S ribosomal subunit. Associates with free 30S ribosomal subunits (but not with 30S subunits that are part of 70S ribosomes or polysomes). Required for efficient processing of 16S rRNA. May interact with the 5'-terminal helix region of 16S rRNA. This Citrobacter koseri (strain ATCC BAA-895 / CDC 4225-83 / SGSC4696) protein is Ribosome-binding factor A.